We begin with the raw amino-acid sequence, 615 residues long: Nuclear receptor subfamily 1 group D member 1 (615 aa).

The segment covering 1-12 (MTTLDSNNNTGG) has biased composition (polar residues). A required for phosphorylation by CSNK1E and cytoplasmic localization region spans residues 1-70 (MTTLDSNNNT…TQDPARSFGT (70 aa)). The disordered stretch occupies residues 1–120 (MTTLDSNNNT…SSRVSPSKGT (120 aa)). Residues 1 to 129 (MTTLDSNNNT…TSNITKLNGM (129 aa)) are modulating. The segment covering 14–34 (ITYIGSSGSSPSRTSPESLYS) has biased composition (low complexity). The segment covering 35 to 48 (DSSNGSFQSLTQGC) has biased composition (polar residues). The segment at 49–285 (PTYFPPSPTG…PPRSPSPEPT (237 aa)) is crucial for activation of GJA1. Phosphoserine; by GSK3-beta occurs at positions 55 and 59. Over residues 72 to 103 (PPSLSDDSSPSSASSSSSSSSSSFYNGSPPGS) the composition is skewed to low complexity. The nuclear receptor DNA-binding region spans 130-206 (VLLCKVCGDV…VGMSRDAVRF (77 aa)). 2 NR C4-type zinc fingers span residues 133–153 (CKVC…CEGC) and 170–194 (CLKN…FKKC). N6-acetyllysine; by KAT5 occurs at positions 192 and 193. Disordered regions lie at residues 235 to 287 (LCPL…PTVE), 312 to 337 (PGNF…SQGC), and 357 to 385 (NGLR…PNSN). Over residues 253–262 (PSPPPAPAPT) the composition is skewed to pro residues. Threonine 275 carries the phosphothreonine; by CDK1 modification. Residues 285 to 615 (TVEDVISQVA…KLLSFRVDAQ (331 aa)) form the NR LBD domain. Position 401 is an N6-acetyllysine (lysine 401). Residue cysteine 419 coordinates heme. Residue lysine 592 is modified to N6-acetyllysine. Residue histidine 603 coordinates heme.

The protein belongs to the nuclear hormone receptor family. NR1 subfamily. As to quaternary structure, binds DNA as a monomer or a homodimer. Interacts with C1D, NR2E3, SP1 and ZNHIT1. Interacts with OPHN1 (via C-terminus). Interacts with PER2; the interaction associates PER2 to BMAL1 promoter region. Interacts with CRY1. Interacts with CCAR2. Interacts with SIAH2. Interacts with FBXW7 and CDK1. Interacts with HUWE1. Interacts with NR0B2. Interacts with NFIL3. Interacts (via domain NR LBD) with HSP90AA1 and HSP90AB1. In terms of processing, ubiquitinated, leading to its proteasomal degradation. Ubiquitinated by the SCF(FBXW7) complex when phosphorylated by CDK1 leading to its proteasomal degradation. Ubiquitinated by SIAH2; leading to its proteasomal degradation. Rapidly ubiquitinated in response to inflammatory triggers and sumoylation is a prerequisite to its ubiquitination. Post-translationally, sumoylated by UBE2I, desumoylated by SENP1, and sumoylation is a prerequisite to its ubiquitination. Phosphorylated by CSNK1E; phosphorylation enhances its cytoplasmic localization. In terms of processing, undergoes lysosome-mediated degradation in a time-dependent manner in the liver.

Its subcellular location is the nucleus. It is found in the cytoplasm. The protein resides in the cell projection. The protein localises to the dendrite. It localises to the dendritic spine. In terms of biological role, transcriptional repressor which coordinates circadian rhythm and metabolic pathways in a heme-dependent manner. Integral component of the complex transcription machinery that governs circadian rhythmicity and forms a critical negative limb of the circadian clock by directly repressing the expression of core clock components BMAL1, CLOCK and CRY1. Also regulates genes involved in metabolic functions, including lipid and bile acid metabolism, adipogenesis, gluconeogenesis and the macrophage inflammatory response. Acts as a receptor for heme which stimulates its interaction with the NCOR1/HDAC3 corepressor complex, enhancing transcriptional repression. Recognizes two classes of DNA response elements within the promoter of its target genes and can bind to DNA as either monomers or homodimers, depending on the nature of the response element. Binds as a monomer to a response element composed of the consensus half-site motif 5'-[A/G]GGTCA-3' preceded by an A/T-rich 5' sequence (RevRE), or as a homodimer to a direct repeat of the core motif spaced by two nucleotides (RevDR-2). Acts as a potent competitive repressor of ROR alpha (RORA) function and regulates the levels of its ligand heme by repressing the expression of PPARGC1A, a potent inducer of heme synthesis. Regulates lipid metabolism by repressing the expression of APOC3 and by influencing the activity of sterol response element binding proteins (SREBPs); represses INSIG2 which interferes with the proteolytic activation of SREBPs which in turn govern the rhythmic expression of enzymes with key functions in sterol and fatty acid synthesis. Regulates gluconeogenesis via repression of G6PC1 and PEPCK and adipocyte differentiation via repression of PPARG. Regulates glucagon release in pancreatic alpha-cells via the AMPK-NAMPT-SIRT1 pathway and the proliferation, glucose-induced insulin secretion and expression of key lipogenic genes in pancreatic-beta cells. Positively regulates bile acid synthesis by increasing hepatic expression of CYP7A1 via repression of NR0B2 and NFIL3 which are negative regulators of CYP7A1. Modulates skeletal muscle oxidative capacity by regulating mitochondrial biogenesis and autophagy; controls mitochondrial biogenesis and respiration by interfering with the STK11-PRKAA1/2-SIRT1-PPARGC1A signaling pathway. Represses the expression of SERPINE1/PAI1, an important modulator of cardiovascular disease and the expression of inflammatory cytokines and chemokines in macrophages. Represses gene expression at a distance in macrophages by inhibiting the transcription of enhancer-derived RNAs (eRNAs). Plays a role in the circadian regulation of body temperature and negatively regulates thermogenic transcriptional programs in brown adipose tissue (BAT); imposes a circadian oscillation in BAT activity, increasing body temperature when awake and depressing thermogenesis during sleep. In concert with NR2E3, regulates transcriptional networks critical for photoreceptor development and function. In addition to its activity as a repressor, can also act as a transcriptional activator. In the ovarian granulosa cells acts as a transcriptional activator of STAR which plays a role in steroid biosynthesis. In collaboration with SP1, activates GJA1 transcription in a heme-independent manner. Represses the transcription of CYP2B10, CYP4A10 and CYP4A14. Represses the transcription of CES2. Represses and regulates the circadian expression of TSHB in a NCOR1-dependent manner. Negatively regulates the protein stability of NR3C1 and influences the time-dependent subcellular distribution of NR3C1, thereby affecting its transcriptional regulatory activity. Plays a critical role in the circadian control of neutrophilic inflammation in the lung; under resting, non-stress conditions, acts as a rhythmic repressor to limit inflammatory activity whereas in the presence of inflammatory triggers undergoes ubiquitin-mediated degradation thereby relieving inhibition of the inflammatory response. Plays a key role in the circadian regulation of microglial activation and neuroinflammation; suppresses microglial activation through the NF-kappaB pathway in the central nervous system. Plays a role in the regulation of the diurnal rhythms of lipid and protein metabolism in the skeletal muscle via transcriptional repression of genes controlling lipid and amino acid metabolism in the muscle. In Rattus norvegicus (Rat), this protein is Nuclear receptor subfamily 1 group D member 1 (Nr1d1).